We begin with the raw amino-acid sequence, 359 residues long: Homoserine dehydrogenase (359 aa).

4 residues coordinate NAD(+): alanine 13, valine 15, valine 16, and alanine 41. Valine 16 serves as a coordination point for NADP(+). Residue valine 16 participates in NADPH binding. The NADPH site is built by lysine 60, threonine 93, serine 94, and lysine 117. Threonine 93 lines the NAD(+) pocket. Threonine 93 contributes to the NADP(+) binding site. Residue lysine 117 participates in NADP(+) binding. Residues glutamate 143, valine 146, alanine 148, and leucine 150 each coordinate Na(+). NADP(+) is bound by residues glycine 205 and glutamate 208. L-homoserine-binding residues include glutamate 208 and aspartate 219. The Proton donor role is filled by lysine 223. Lysine 290 participates in a covalent cross-link: Glycyl lysine isopeptide (Lys-Gly) (interchain with G-Cter in ubiquitin). An NAD(+)-binding site is contributed by glycine 340. Glycine 340 provides a ligand contact to NADP(+). Glycine 340 lines the NADPH pocket.

The protein belongs to the homoserine dehydrogenase family. Homodimer. It depends on a metal cation as a cofactor.

The enzyme catalyses L-homoserine + NADP(+) = L-aspartate 4-semialdehyde + NADPH + H(+). It catalyses the reaction L-homoserine + NAD(+) = L-aspartate 4-semialdehyde + NADH + H(+). It functions in the pathway amino-acid biosynthesis; L-methionine biosynthesis via de novo pathway; L-homoserine from L-aspartate: step 3/3. The protein operates within amino-acid biosynthesis; L-threonine biosynthesis; L-threonine from L-aspartate: step 3/5. Catalyzes the conversion of L-aspartate-beta-semialdehyde (L-Asa) to L-homoserine (L-Hse), the third step in the biosynthesis of amino acids that derive from aspartate (the aspartate family of amino acids), including methioinine and threonine, the latter of which is a precursor to isoleucine; production of homoserine leads to a branch-point in the pathway as it can either be O-phosphorylated for processing to threonine, or O-acylated for processing to methionine. The polypeptide is Homoserine dehydrogenase (HOM6) (Saccharomyces cerevisiae (strain ATCC 204508 / S288c) (Baker's yeast)).